A 483-amino-acid chain; its full sequence is tRNA (guanine(37)-N(1))-methyltransferase (483 aa).

Residues 1–24 (MEEAATLQSLSISSSSPFPNNSSP) form a disordered region. Positions 9–24 (SLSISSSSPFPNNSSP) are enriched in low complexity. S-adenosyl-L-methionine is bound by residues His252, 290 to 291 (DL), and Asn379.

Belongs to the class I-like SAM-binding methyltransferase superfamily. TRM5/TYW2 family. In terms of assembly, monomer.

The protein localises to the mitochondrion matrix. The protein resides in the nucleus. It is found in the cytoplasm. It carries out the reaction guanosine(37) in tRNA + S-adenosyl-L-methionine = N(1)-methylguanosine(37) in tRNA + S-adenosyl-L-homocysteine + H(+). Specifically methylates the N1 position of guanosine-37 in various cytoplasmic and mitochondrial tRNAs. Methylation is not dependent on the nature of the nucleoside 5' of the target nucleoside. This is the first step in the biosynthesis of wybutosine (yW), a modified base adjacent to the anticodon of tRNAs and required for accurate decoding. The protein is tRNA (guanine(37)-N(1))-methyltransferase of Ajellomyces capsulatus (strain G186AR / H82 / ATCC MYA-2454 / RMSCC 2432) (Darling's disease fungus).